Consider the following 231-residue polypeptide: Biosynthetic peptidoglycan transglycosylase (231 aa).

The helical transmembrane segment at 7-27 threads the bilayer; that stretch reads LLFWLILVPILLVLLMQLYFF.

The protein belongs to the glycosyltransferase 51 family.

It localises to the cell inner membrane. It catalyses the reaction [GlcNAc-(1-&gt;4)-Mur2Ac(oyl-L-Ala-gamma-D-Glu-L-Lys-D-Ala-D-Ala)](n)-di-trans,octa-cis-undecaprenyl diphosphate + beta-D-GlcNAc-(1-&gt;4)-Mur2Ac(oyl-L-Ala-gamma-D-Glu-L-Lys-D-Ala-D-Ala)-di-trans,octa-cis-undecaprenyl diphosphate = [GlcNAc-(1-&gt;4)-Mur2Ac(oyl-L-Ala-gamma-D-Glu-L-Lys-D-Ala-D-Ala)](n+1)-di-trans,octa-cis-undecaprenyl diphosphate + di-trans,octa-cis-undecaprenyl diphosphate + H(+). The protein operates within cell wall biogenesis; peptidoglycan biosynthesis. Peptidoglycan polymerase that catalyzes glycan chain elongation from lipid-linked precursors. The protein is Biosynthetic peptidoglycan transglycosylase of Herminiimonas arsenicoxydans.